We begin with the raw amino-acid sequence, 404 residues long: Probable ketol-acid reductoisomerase, mitochondrial (404 aa).

The KARI N-terminal Rossmann domain maps to 63–253 (TKENVWERSD…AVGSGFIYQT (191 aa)). Residues 91–100 (GYGSQGHGQG), 115–120 (RKDGAS), and 153–157 (SDAAQ) each bind NADP(+). The active site involves histidine 178. The 148-residue stretch at 254-401 (TFKKEVISDL…EVVRSLRPEH (148 aa)) folds into the KARI C-terminal knotted domain. Position 261 is a phosphoserine (serine 261). Mg(2+) contacts are provided by aspartate 262, glutamate 266, glutamate 298, and glutamate 302. Serine 324 serves as a coordination point for substrate.

This sequence belongs to the ketol-acid reductoisomerase family. Requires Mg(2+) as cofactor.

It localises to the mitochondrion. The enzyme catalyses (2R)-2,3-dihydroxy-3-methylbutanoate + NADP(+) = (2S)-2-acetolactate + NADPH + H(+). It catalyses the reaction (2R,3R)-2,3-dihydroxy-3-methylpentanoate + NADP(+) = (S)-2-ethyl-2-hydroxy-3-oxobutanoate + NADPH + H(+). Its pathway is amino-acid biosynthesis; L-isoleucine biosynthesis; L-isoleucine from 2-oxobutanoate: step 2/4. The protein operates within amino-acid biosynthesis; L-valine biosynthesis; L-valine from pyruvate: step 2/4. In Schizosaccharomyces pombe (strain 972 / ATCC 24843) (Fission yeast), this protein is Probable ketol-acid reductoisomerase, mitochondrial (ilv5).